Here is a 423-residue protein sequence, read N- to C-terminus: AP-1 complex subunit mu-2 (423 aa).

The MHD domain maps to 168–421 (KNEVFIDVIE…ITQSGDYQLR (254 aa)).

The protein belongs to the adaptor complexes medium subunit family. In terms of assembly, adaptor protein complex 1 (AP-1) is a heterotetramer composed of two large adaptins (gamma-type subunit AP1G1 and beta-type subunit AP1B1), a medium adaptin (mu-type subunit AP1M1 or AP1M2) and a small adaptin (sigma-type subunit AP1S1 or AP1S2 or AP1S3). Interacts with P2X4. Phosphorylation of membrane-bound AP1M1/AP1M2 increases its affinity for sorting signals.

It localises to the golgi apparatus. The protein localises to the cytoplasmic vesicle. Its subcellular location is the clathrin-coated vesicle membrane. Subunit of clathrin-associated adaptor protein complex 1 that plays a role in protein sorting in the trans-Golgi network (TGN) and endosomes. The AP complexes mediate the recruitment of clathrin to membranes and the recognition of sorting signals within the cytosolic tails of transmembrane cargo molecules. This Homo sapiens (Human) protein is AP-1 complex subunit mu-2 (AP1M2).